A 677-amino-acid polypeptide reads, in one-letter code: Fermitin family homolog 1 (677 aa).

The FERM domain occupies 96–653 (MLRLRLPNAK…HEYIGGYIFL (558 aa)). The segment at 157 to 181 (KEPVIEDILNLESSSTSSGSPVSPG) is disordered. Over residues 169–181 (SSSTSSGSPVSPG) the composition is skewed to low complexity. Residues serine 170 and serine 179 each carry the phosphoserine modification. The 97-residue stretch at 377-473 (KLFRPKKLML…WMAACILASK (97 aa)) folds into the PH domain.

The protein belongs to the kindlin family. Interacts with the cytoplasmic domain of integrins ITGB1 and ITGB3.

It is found in the cytoplasm. The protein resides in the cytoskeleton. The protein localises to the cell junction. Its subcellular location is the focal adhesion. It localises to the cell projection. It is found in the ruffle membrane. In terms of biological role, involved in cell adhesion. Contributes to integrin activation. When coexpressed with talin, potentiates activation of ITGA2B. Required for normal keratinocyte proliferation. Required for normal polarization of basal keratinocytes in skin, and for normal cell shape. Required for normal adhesion of keratinocytes to fibronectin and laminin, and for normal keratinocyte migration to wound sites. The chain is Fermitin family homolog 1 (Fermt1) from Mus musculus (Mouse).